The sequence spans 153 residues: Endoribonuclease YbeY (153 aa).

Positions 118, 122, and 128 each coordinate Zn(2+).

It belongs to the endoribonuclease YbeY family. Requires Zn(2+) as cofactor.

Its subcellular location is the cytoplasm. Functionally, single strand-specific metallo-endoribonuclease involved in late-stage 70S ribosome quality control and in maturation of the 3' terminus of the 16S rRNA. The polypeptide is Endoribonuclease YbeY (Staphylococcus haemolyticus (strain JCSC1435)).